The primary structure comprises 401 residues: Enoyl-[acyl-carrier-protein] reductase [NADH] 1 (401 aa).

NAD(+)-binding positions include 48 to 53 (GSSSGY), 74 to 75 (FE), 111 to 112 (DA), and 139 to 140 (LA). Y225 contacts substrate. Y235 (proton donor) is an active-site residue. NAD(+)-binding positions include K244 and 273–275 (VVT).

Belongs to the TER reductase family. Monomer.

The enzyme catalyses a 2,3-saturated acyl-[ACP] + NAD(+) = a (2E)-enoyl-[ACP] + NADH + H(+). The catalysed reaction is a 2,3-saturated acyl-CoA + NAD(+) = a (2E)-enoyl-CoA + NADH + H(+). It catalyses the reaction (2E)-butenoyl-[ACP] + NADH + H(+) = butanoyl-[ACP] + NAD(+). It carries out the reaction butanoyl-CoA + NAD(+) = (2E)-butenoyl-CoA + NADH + H(+). Its pathway is lipid metabolism; fatty acid biosynthesis. Its activity is regulated as follows. Weakly inhibited by triclosan. In terms of biological role, involved in the final reduction of the elongation cycle of fatty acid synthesis (FAS II). Catalyzes the NADH-dependent reduction of a carbon-carbon double bond in an enoyl moiety that is covalently linked to an acyl carrier protein (ACP). It can use both crotonyl-CoA and crotonyl-ACP. This chain is Enoyl-[acyl-carrier-protein] reductase [NADH] 1, found in Vibrio cholerae serotype O1 (strain ATCC 39315 / El Tor Inaba N16961).